The primary structure comprises 444 residues: MKTVESNFDGLVGPTHNYSGLSVGNIASKSNQSGVSNPKQAVKQGLEKMKALHDMGFVQGVLAPQERPDIHTLRRLGFSGSDSEVLKKSYQYSPQLLAACSSASSMWTANAGTVSPSADTADGKVHFTPANLINKFHRSIEDQVTGNILKATFSDEEHFVHHQALPHSDYFGDEGAANHTRFCREYGEQGVEFFVFGKSAFNESYLAPKKYPARQTLEASEAIARTHGLREQFTVFAQQNPDVIDQGVFHNDVIAVGNKNTLFCHQQAFLNQEKVKSDLSDSYGSGFNVIEVPTDKVSVQDAVETYLFNSQLITKADGTTLIILPEHCRQNSRVWAYLNELVEQKCGIDELHTFDLKQSMQNGGGPACLRLRVVLNEAEQKAVNQHTLMSEELFTTLNLWADKHYRDRIEDKDLADPQLLVESRAALDELTQIMHLGSIYPFQK.

Substrate is bound by residues 19–28 (SGLSVGNIAS), Asn110, and 137–138 (HR). The active site involves Glu174. Position 214 (Arg214) interacts with substrate. His250 is an active-site residue. Substrate is bound by residues Asp252 and Asn362. The active-site Nucleophile is the Cys368.

This sequence belongs to the succinylarginine dihydrolase family. As to quaternary structure, homodimer.

The enzyme catalyses N(2)-succinyl-L-arginine + 2 H2O + 2 H(+) = N(2)-succinyl-L-ornithine + 2 NH4(+) + CO2. It functions in the pathway amino-acid degradation; L-arginine degradation via AST pathway; L-glutamate and succinate from L-arginine: step 2/5. Functionally, catalyzes the hydrolysis of N(2)-succinylarginine into N(2)-succinylornithine, ammonia and CO(2). The sequence is that of N-succinylarginine dihydrolase from Aliivibrio fischeri (strain ATCC 700601 / ES114) (Vibrio fischeri).